The chain runs to 638 residues: Ubiquitin-like-specific protease 2 (638 aa).

The span at 1-12 shows a compositional bias: basic and acidic residues; the sequence is MRDSKDALDDKS. Disordered stretches follow at residues 1–79 and 238–314; these read MRDS…PKHL and PQKT…TSND. Residues 238 to 249 show a composition bias toward polar residues; that stretch reads PQKTVRSIVKQT. Residues 250–264 are compositionally biased toward low complexity; the sequence is SSPHSSKMPKHSLPS. A compositionally biased stretch (polar residues) spans 267–314; the sequence is TPFNSNSGDSLLSRIKNSNQSSSERPTANNGAQEQNQSSSSAGNTSND. Catalysis depends on residues His-440 and Asp-494. The residue at position 526 (Thr-526) is a Phosphothreonine. Residue Cys-544 is part of the active site. Positions 610-619 are enriched in polar residues; that stretch reads NERQSLSSGS. A disordered region spans residues 610 to 638; it reads NERQSLSSGSNDEEDKENDDDLAILPITN. Over residues 620-631 the composition is skewed to acidic residues; it reads NDEEDKENDDDL.

It belongs to the peptidase C48 family.

The protein localises to the nucleus. In Schizosaccharomyces pombe (strain 972 / ATCC 24843) (Fission yeast), this protein is Ubiquitin-like-specific protease 2 (ulp2).